The following is a 206-amino-acid chain: Small ribosomal subunit protein uS4 (206 aa).

The S4 RNA-binding domain maps to 96–168 (SRLDNVVYRM…LELAEQREKP (73 aa)).

It belongs to the universal ribosomal protein uS4 family. In terms of assembly, part of the 30S ribosomal subunit. Contacts protein S5. The interaction surface between S4 and S5 is involved in control of translational fidelity.

One of the primary rRNA binding proteins, it binds directly to 16S rRNA where it nucleates assembly of the body of the 30S subunit. In terms of biological role, with S5 and S12 plays an important role in translational accuracy. The protein is Small ribosomal subunit protein uS4 of Baumannia cicadellinicola subsp. Homalodisca coagulata.